A 48-amino-acid chain; its full sequence is DNA-directed RNA polymerase subunit Rpo12 (48 aa).

Zn(2+) is bound by residues Cys-6, Cys-9, Cys-26, and Cys-29.

The protein belongs to the archaeal Rpo12/eukaryotic RPC10 RNA polymerase subunit family. Part of the 13-subunit RNA polymerase. Zn(2+) serves as cofactor.

Its subcellular location is the cytoplasm. It carries out the reaction RNA(n) + a ribonucleoside 5'-triphosphate = RNA(n+1) + diphosphate. DNA-dependent RNA polymerase (RNAP) catalyzes the transcription of DNA into RNA using the four ribonucleoside triphosphates as substrates. The sequence is that of DNA-directed RNA polymerase subunit Rpo12 from Sulfolobus acidocaldarius (strain ATCC 33909 / DSM 639 / JCM 8929 / NBRC 15157 / NCIMB 11770).